Reading from the N-terminus, the 216-residue chain is uncharacterized protein (216 aa).

6 consecutive transmembrane segments (helical) span residues Y12–A32, G48–L68, L74–L94, I134–L154, F156–F176, and L191–A211.

Belongs to the Rht family.

It localises to the cell membrane. This is an uncharacterized protein from Pseudomonas aeruginosa (strain ATCC 15692 / DSM 22644 / CIP 104116 / JCM 14847 / LMG 12228 / 1C / PRS 101 / PAO1).